We begin with the raw amino-acid sequence, 1368 residues long: DNA-directed RNA polymerase subunit beta (1368 aa).

This sequence belongs to the RNA polymerase beta chain family. The RNAP catalytic core consists of 2 alpha, 1 beta, 1 beta' and 1 omega subunit. When a sigma factor is associated with the core the holoenzyme is formed, which can initiate transcription.

The catalysed reaction is RNA(n) + a ribonucleoside 5'-triphosphate = RNA(n+1) + diphosphate. DNA-dependent RNA polymerase catalyzes the transcription of DNA into RNA using the four ribonucleoside triphosphates as substrates. This Burkholderia cenocepacia (strain HI2424) protein is DNA-directed RNA polymerase subunit beta.